The sequence spans 306 residues: Ornithine carbamoyltransferase (306 aa).

Carbamoyl phosphate contacts are provided by residues 53–56 (STRT), Gln-80, Arg-104, and 131–134 (HPCQ). L-ornithine is bound by residues Asn-162, Asp-220, and 224-225 (SM). Residues 260 to 261 (CL) and Arg-288 each bind carbamoyl phosphate.

It belongs to the aspartate/ornithine carbamoyltransferase superfamily. OTCase family.

It localises to the cytoplasm. The enzyme catalyses carbamoyl phosphate + L-ornithine = L-citrulline + phosphate + H(+). It participates in amino-acid biosynthesis; L-arginine biosynthesis; L-arginine from L-ornithine and carbamoyl phosphate: step 1/3. Reversibly catalyzes the transfer of the carbamoyl group from carbamoyl phosphate (CP) to the N(epsilon) atom of ornithine (ORN) to produce L-citrulline. The sequence is that of Ornithine carbamoyltransferase from Methylobacillus flagellatus (strain ATCC 51484 / DSM 6875 / VKM B-1610 / KT).